A 120-amino-acid polypeptide reads, in one-letter code: Chaperonin GroEL (120 aa).

23–27 serves as a coordination point for ATP; it reads DGTTT.

It belongs to the chaperonin (HSP60) family. In terms of assembly, forms a cylinder of 14 subunits composed of two heptameric rings stacked back-to-back. Interacts with the co-chaperonin GroES.

It localises to the cytoplasm. It carries out the reaction ATP + H2O + a folded polypeptide = ADP + phosphate + an unfolded polypeptide.. Functionally, together with its co-chaperonin GroES, plays an essential role in assisting protein folding. The GroEL-GroES system forms a nano-cage that allows encapsulation of the non-native substrate proteins and provides a physical environment optimized to promote and accelerate protein folding. This Mycobacterium shimoidei protein is Chaperonin GroEL.